The chain runs to 202 residues: Endothelin-1 (202 aa).

A signal peptide spans 1 to 25 (MDYFPMIFALLFVAFQGAPEAAVLG). Positions 26 to 50 (TELSTGAESGGERPVPTTPWRPRRS) are excised as a propeptide. A disordered region spans residues 29-48 (STGAESGGERPVPTTPWRPR). 2 cysteine pairs are disulfide-bonded: Cys-53-Cys-67 and Cys-55-Cys-63. Residues 74–202 (VNTPEHVVPY…DKKVIYSRAH (129 aa)) constitute a propeptide that is removed on maturation. Residues 110-124 (CQCASQTDKKCQNFC) are endothelin-like.

Belongs to the endothelin/sarafotoxin family.

The protein localises to the secreted. Endothelins are endothelium-derived vasoconstrictor peptides. Probable ligand for G-protein coupled receptors EDNRA and EDNRB which activates PTK2B, BCAR1, BCAR3 and, GTPases RAP1 and RHOA cascade in glomerular mesangial cells. Also binds the DEAR/FBXW7-AS1 receptor. Promotes mesenteric arterial wall remodeling via activation of ROCK signaling and subsequent colocalization of NFATC3 with F-actin filaments. NFATC3 then translocates to the nucleus where it subsequently promotes the transcription of the smooth muscle hypertrophy and differentiation marker ACTA2. This Ovis aries (Sheep) protein is Endothelin-1 (EDN1).